A 158-amino-acid polypeptide reads, in one-letter code: Transcription elongation factor GreA (158 aa).

Residues E2–H70 are a coiled coil.

This sequence belongs to the GreA/GreB family.

Its function is as follows. Necessary for efficient RNA polymerase transcription elongation past template-encoded arresting sites. The arresting sites in DNA have the property of trapping a certain fraction of elongating RNA polymerases that pass through, resulting in locked ternary complexes. Cleavage of the nascent transcript by cleavage factors such as GreA or GreB allows the resumption of elongation from the new 3'terminus. GreA releases sequences of 2 to 3 nucleotides. This Staphylococcus epidermidis (strain ATCC 35984 / DSM 28319 / BCRC 17069 / CCUG 31568 / BM 3577 / RP62A) protein is Transcription elongation factor GreA.